The chain runs to 596 residues: Alpha-1,3-galactosidase A (596 aa).

A signal peptide spans 1-21 (MQNPVASLLFILAMLTGPCPA). The interval 23–57 (DYPERTERTQSAGNHVWHIDPDKGNDGNPGTAPST) is disordered. PbH1 repeat units lie at residues 351–373 (RGKI…NVHG), 482–504 (RKPV…LVED), 515–537 (VRNM…QIVP), and 547–569 (HRNI…RIRH).

This sequence belongs to the glycosyl hydrolase 110 family. A subfamily.

The enzyme catalyses Hydrolysis of terminal, non-reducing branched (1-&gt;3)-alpha-D-galactosidic residues, producing free D-galactose.. The catalysed reaction is Hydrolysis of terminal, non-reducing alpha-D-galactose residues in alpha-D-galactosides, including galactose oligosaccharides, galactomannans and galactolipids.. In terms of biological role, alpha-galactosidase that specifically removes branched alpha-1,3-linked galactose residues present in blood group B antigens. Has no activity toward linear alpha-1,3-linked galactose residues. The protein is Alpha-1,3-galactosidase A (glaA) of Akkermansia muciniphila (strain ATCC BAA-835 / DSM 22959 / JCM 33894 / BCRC 81048 / CCUG 64013 / CIP 107961 / Muc).